We begin with the raw amino-acid sequence, 309 residues long: tRNA pseudouridine synthase B (309 aa).

Asp39 functions as the Nucleophile in the catalytic mechanism.

This sequence belongs to the pseudouridine synthase TruB family. Type 1 subfamily.

It catalyses the reaction uridine(55) in tRNA = pseudouridine(55) in tRNA. Functionally, responsible for synthesis of pseudouridine from uracil-55 in the psi GC loop of transfer RNAs. The sequence is that of tRNA pseudouridine synthase B from Bacillus subtilis (strain 168).